The sequence spans 314 residues: BTB/POZ domain-containing adapter for CUL3-mediated RhoA degradation protein 2 (314 aa).

In terms of domain architecture, BTB spans 32–100; that stretch reads KYVRLNVGGS…LRDDTIALPK (69 aa).

This sequence belongs to the BACURD family. Component of the BCR(TNFAIP1) E3 ubiquitin ligase complex, at least composed of CUL3, TNFAIP1/BACURD2 and RBX1.

The protein resides in the cytoplasm. Its subcellular location is the nucleus. The protein localises to the endosome. Its pathway is protein modification; protein ubiquitination. Functionally, substrate-specific adapter of a BCR (BTB-CUL3-RBX1) E3 ubiquitin-protein ligase complex involved in regulation of cytoskeleton structure. The BCR(TNFAIP1) E3 ubiquitin ligase complex mediates the ubiquitination of target proteins, leading to their degradation by the proteasome. This Gallus gallus (Chicken) protein is BTB/POZ domain-containing adapter for CUL3-mediated RhoA degradation protein 2 (TNFAIP1).